The sequence spans 627 residues: Hemocyanin D chain (627 aa).

Residues H171, H175, H202, H322, H326, and H362 each contribute to the Cu cation site. An N-linked (GlcNAc...) asparagine glycan is attached at N445. C531 and C579 are disulfide-bonded.

Belongs to the tyrosinase family. Hemocyanin subfamily. As to quaternary structure, tarantula hemocyanin is a 24-chain polymer with seven different chains identified. As to expression, hemolymph.

Its subcellular location is the secreted. It is found in the extracellular space. In terms of biological role, hemocyanins are copper-containing oxygen carriers occurring freely dissolved in the hemolymph of many mollusks and arthropods. In Aphonopelma sp. (American tarantula), this protein is Hemocyanin D chain (HCD).